A 329-amino-acid chain; its full sequence is Olfactory receptor 10J3 (329 aa).

At 1–26 (MPKLNSTFVTEFLFEGFSSFRRQHKL) the chain is on the extracellular side. Residue Asn-5 is glycosylated (N-linked (GlcNAc...) asparagine). The helical transmembrane segment at 27–47 (VFFVVFLTLYLLTLSGNVIIM) threads the bilayer. Residues 48–55 (TIIRLDHH) lie on the Cytoplasmic side of the membrane. Residues 56–76 (LHTPMYFFLCMLSISETCYTV) form a helical membrane-spanning segment. The Extracellular portion of the chain corresponds to 77 to 100 (AIIPHMLSGLLNPHQPIATQSCAT). A disulfide bond links Cys-98 and Cys-190. The helical transmembrane segment at 101–121 (QLFFYLTFGINNCFLLTVMGY) threads the bilayer. The Cytoplasmic portion of the chain corresponds to 122–140 (DRYVAICNPLRYSVIMGKR). A helical transmembrane segment spans residues 141–161 (ACIQLASGSLGIGLGMAIVQV). The Extracellular segment spans residues 162-198 (TSVFGLPFCDAFVISHFFCDVRHLLKLACTDTTVNEI). Residues 199–218 (INFVVSVCVLVLPMGLVFIS) form a helical membrane-spanning segment. Residues 219–238 (YVLIISTILKIASAEGQKKA) lie on the Cytoplasmic side of the membrane. The helical transmembrane segment at 239–259 (FATCASHLTVVIIHYGCASII) threads the bilayer. At 260 to 272 (YLKPKSQSSLGQD) the chain is on the extracellular side. Residues 273-293 (RLISVTYTHHSPTEPCCVQPE) form a helical membrane-spanning segment. At 294 to 329 (EQGGQRCSAQSRGAKNSVSLMKRGCEGFSFAFINMY) the chain is on the cytoplasmic side.

Belongs to the G-protein coupled receptor 1 family.

The protein localises to the cell membrane. Functionally, odorant receptor. In Homo sapiens (Human), this protein is Olfactory receptor 10J3 (OR10J3).